Consider the following 301-residue polypeptide: Probable actin-related protein 2/3 complex subunit 2 (301 aa).

It belongs to the ARPC2 family. As to quaternary structure, component of the Arp2/3 complex, at least composed of arx-1, arx-2, arx-4 and arx-6.

Its subcellular location is the cytoplasm. The protein resides in the cytoskeleton. Functionally, functions as actin-binding component of the Arp2/3 complex which is involved in regulation of actin polymerization and together with an activating nucleation-promoting factor (NPF) mediates the formation of branched actin networks. Seems to contact the mother actin filament. Plays a role in time-dependent memory loss and the retention of conditioned behavior over time. The chain is Probable actin-related protein 2/3 complex subunit 2 from Caenorhabditis elegans.